A 154-amino-acid polypeptide reads, in one-letter code: Small ribosomal subunit protein uS15 (154 aa).

The segment covering 1–10 (MARMHSRRRG) has biased composition (basic residues). Positions 1–32 (MARMHSRRRGSSGSDRPTADEPPEWSEVDEDA) are disordered. Acidic residues predominate over residues 21 to 32 (EPPEWSEVDEDA).

The protein belongs to the universal ribosomal protein uS15 family. In terms of assembly, part of the 30S ribosomal subunit.

The polypeptide is Small ribosomal subunit protein uS15 (Natronomonas pharaonis (strain ATCC 35678 / DSM 2160 / CIP 103997 / JCM 8858 / NBRC 14720 / NCIMB 2260 / Gabara) (Halobacterium pharaonis)).